The primary structure comprises 332 residues: Probable xyloglucan endotransglucosylase/hydrolase protein 28 (332 aa).

The signal sequence occupies residues 1 to 22 (MGFITRFLVFMSLFTSLVSGFA). The GH16 domain maps to 23–223 (LQKLPLIQFD…YKYAPYVSQF (201 aa)). Residue glutamate 108 is the Nucleophile of the active site. Glutamate 112 serves as the catalytic Proton donor. Xyloglucan-binding positions include glutamate 112 and 125-127 (QTN). N-linked (GlcNAc...) asparagine glycosylation is present at asparagine 131. Xyloglucan is bound by residues 135 to 139 (HLGRE), 202 to 203 (KW), glycine 207, and arginine 282. A disulfide bridge links cysteine 277 with cysteine 290. Over residues 313 to 326 (HGHRRGKHRSRSRL) the composition is skewed to basic residues. Residues 313–332 (HGHRRGKHRSRSRLARTESI) form a disordered region.

The protein belongs to the glycosyl hydrolase 16 family. XTH group 3 subfamily. In terms of processing, contains at least one intrachain disulfide bond essential for its enzymatic activity. Expressed in 7 day old seedlings, roots, rosette leaves, internodes between nodes bearing axillary shoots, nodes bearing flowers, flower buds and siliques.

It is found in the secreted. The protein localises to the cell wall. The protein resides in the extracellular space. Its subcellular location is the apoplast. It catalyses the reaction breaks a beta-(1-&gt;4) bond in the backbone of a xyloglucan and transfers the xyloglucanyl segment on to O-4 of the non-reducing terminal glucose residue of an acceptor, which can be a xyloglucan or an oligosaccharide of xyloglucan.. Its function is as follows. Catalyzes xyloglucan endohydrolysis (XEH) and/or endotransglycosylation (XET). Cleaves and religates xyloglucan polymers, an essential constituent of the primary cell wall, and thereby participates in cell wall construction of growing tissues. This Arabidopsis thaliana (Mouse-ear cress) protein is Probable xyloglucan endotransglucosylase/hydrolase protein 28 (XTH28).